We begin with the raw amino-acid sequence, 786 residues long: LPS-assembly protein LptD (786 aa).

A signal peptide spans 1–39 (MPPKPLFPNVFPGDGAPRKRRLALALLAVPGLVPAVSYA). The tract at residues 767 to 786 (PGYTPLPPPPPPMSRFSNYE) is disordered. Residues 770–779 (TPLPPPPPPM) show a composition bias toward pro residues.

It belongs to the LptD family. Component of the lipopolysaccharide transport and assembly complex. Interacts with LptE and LptA.

The protein localises to the cell outer membrane. Its function is as follows. Together with LptE, is involved in the assembly of lipopolysaccharide (LPS) at the surface of the outer membrane. The sequence is that of LPS-assembly protein LptD from Burkholderia lata (strain ATCC 17760 / DSM 23089 / LMG 22485 / NCIMB 9086 / R18194 / 383).